The following is a 110-amino-acid chain: Large ribosomal subunit protein uL24 (110 aa).

The protein belongs to the universal ribosomal protein uL24 family. As to quaternary structure, part of the 50S ribosomal subunit.

One of two assembly initiator proteins, it binds directly to the 5'-end of the 23S rRNA, where it nucleates assembly of the 50S subunit. In terms of biological role, one of the proteins that surrounds the polypeptide exit tunnel on the outside of the subunit. This is Large ribosomal subunit protein uL24 from Chloroflexus aurantiacus (strain ATCC 29366 / DSM 635 / J-10-fl).